We begin with the raw amino-acid sequence, 22 residues long: IIGGYECKPHSQPWQAFLVDNK.

It belongs to the peptidase S1 family. As to expression, detected in muscle (at protein level).

Its subcellular location is the cytoplasm. With respect to regulation, inhibited by the serine protease inhibitors, antipain, aprotinin, DFP, leupeptin, STI and TLCK, and by the cysteine proteinase inhibitors DTNB and to a lesser extent E-64. Not inhibited by the metalloproteinase inhibitor EDTA. In terms of biological role, serine protease that selectively cleaves Arg-|-Xaa bonds. The protein is Myofibril-bound serine protease of Cyprinus carpio (Common carp).